The chain runs to 393 residues: Beta-1,4-galactosyltransferase 3 (393 aa).

Over M1–C10 the chain is Cytoplasmic. A helical; Signal-anchor for type II membrane protein transmembrane segment spans residues T11–F31. At R32–H393 the chain is on the lumenal side. N57 carries N-linked (GlcNAc...) asparagine glycosylation. C77 and C119 form a disulfide bridge. P130–R134 is a UDP-alpha-D-galactose binding site. Residue N166 is glycosylated (N-linked (GlcNAc...) asparagine). UDP-alpha-D-galactose is bound by residues F169–R171, V196–D197, Y226, and W258. Residues C190 and C209 are joined by a disulfide bond. A Mn(2+)-binding site is contributed by D197. G260–D263 serves as a coordination point for N-acetyl-D-glucosamine. Residue H291 coordinates Mn(2+). H291–G293 contacts UDP-alpha-D-galactose. An N-acetyl-D-glucosamine-binding site is contributed by R303. 2 N-linked (GlcNAc...) asparagine glycosylation sites follow: N337 and N385. A disordered region spans residues T339–H393.

It belongs to the glycosyltransferase 7 family. It depends on Mn(2+) as a cofactor.

Its subcellular location is the golgi apparatus. The protein localises to the golgi stack membrane. It catalyses the reaction an N-acetyl-beta-D-glucosaminyl derivative + UDP-alpha-D-galactose = a beta-D-galactosyl-(1-&gt;4)-N-acetyl-beta-D-glucosaminyl derivative + UDP + H(+). It carries out the reaction N-acetyl-D-glucosamine + UDP-alpha-D-galactose = beta-D-galactosyl-(1-&gt;4)-N-acetyl-D-glucosamine + UDP + H(+). The enzyme catalyses a beta-D-GlcNAc-(1-&gt;3)-beta-D-Gal-(1-&gt;4)-beta-D-Glc-(1&lt;-&gt;1)-Cer(d18:1(4E)) + UDP-alpha-D-galactose = a neolactoside nLc4Cer(d18:1(4E)) + UDP + H(+). The catalysed reaction is a beta-D-glucosylceramide + UDP-alpha-D-galactose = a beta-D-galactosyl-(1-&gt;4)-beta-D-glucosyl-(1&lt;-&gt;1)-ceramide + UDP + H(+). It catalyses the reaction a neolactoside IV(3)-beta-GlcNAc-nLc4Cer + UDP-alpha-D-galactose = a neolactoside nLc6Cer + UDP + H(+). Its pathway is protein modification; protein glycosylation. Its function is as follows. Responsible for the synthesis of complex-type N-linked oligosaccharides in many glycoproteins as well as the carbohydrate moieties of glycolipids. This chain is Beta-1,4-galactosyltransferase 3 (B4GALT3), found in Pongo abelii (Sumatran orangutan).